The primary structure comprises 193 residues: Ion-translocating oxidoreductase complex subunit A (193 aa).

A run of 6 helical transmembrane segments spans residues 5–25 (LLLFVGTVLVNNFVLVKFLGL), 39–59 (IGMGFATTFVMTIASISSWLM), 62–82 (FILVPLDLLYLRTLSFILVIA), 102–122 (LLGIFLPLITTNCAVLGVALL), 134–154 (AVYGFGAAVGFSLVMVLFAAI), and 171–191 (SIGLITAGLMSLAFMGFSGLV).

The protein belongs to the NqrDE/RnfAE family. The complex is composed of six subunits: RnfA, RnfB, RnfC, RnfD, RnfE and RnfG.

The protein localises to the cell inner membrane. Part of a membrane-bound complex that couples electron transfer with translocation of ions across the membrane. The chain is Ion-translocating oxidoreductase complex subunit A from Proteus mirabilis (strain HI4320).